The primary structure comprises 174 residues: Transcription factor bHLH36 (174 aa).

In terms of domain architecture, bHLH spans 1–53 (MEKMMHRETERQRRQEMASLYASLRSLLPLHFIKGKRSTSDQVNEAVNYIKYL).

Homodimer. Expressed constitutively in roots, leaves, stems, and flowers.

The protein resides in the nucleus. The sequence is that of Transcription factor bHLH36 (BHLH36) from Arabidopsis thaliana (Mouse-ear cress).